The following is a 258-amino-acid chain: Snake venom serine protease 5 (258 aa).

A signal peptide spans 1–18 (MVLIRVLANLLILQLSYA). Residues 19–24 (QKSSEL) constitute a propeptide that is removed on maturation. In terms of domain architecture, Peptidase S1 spans 25-249 (VVGGRPCNIN…HLDWIQNIIA (225 aa)). 6 disulfide bridges follow: C31–C163, C50–C66, C98–C256, C142–C210, C174–C189, and C200–C225. The N-linked (GlcNAc...) asparagine glycan is linked to N44. The active-site Charge relay system is H65. N-linked (GlcNAc...) asparagine glycosylation occurs at N103. D110 serves as the catalytic Charge relay system. Residues N121, N122, N154, and N170 are each glycosylated (N-linked (GlcNAc...) asparagine). S204 (charge relay system) is an active-site residue. A glycan (N-linked (GlcNAc...) asparagine) is linked at N251.

This sequence belongs to the peptidase S1 family. Snake venom subfamily. Monomer. As to expression, expressed by the venom gland.

The protein resides in the secreted. Functionally, snake venom serine protease that may act in the hemostasis system of the prey. This Trimeresurus stejnegeri (Chinese green tree viper) protein is Snake venom serine protease 5.